The chain runs to 230 residues: Large ribosomal subunit protein uL1 (230 aa).

It belongs to the universal ribosomal protein uL1 family. In terms of assembly, part of the 50S ribosomal subunit.

Its function is as follows. Binds directly to 23S rRNA. The L1 stalk is quite mobile in the ribosome, and is involved in E site tRNA release. In terms of biological role, protein L1 is also a translational repressor protein, it controls the translation of the L11 operon by binding to its mRNA. The chain is Large ribosomal subunit protein uL1 from Bacillus cereus (strain G9842).